The chain runs to 559 residues: 5-epiaristolochene synthase (559 aa).

Mg(2+) is bound by residues D312, D316, D455, T459, and E463. A DDXXD motif motif is present at residues 312–316 (DDTYD).

The protein belongs to the terpene synthase family. In terms of assembly, monomer. Mg(2+) is required as a cofactor. In terms of tissue distribution, expressed only in treated leaves an not detected in control leaves.

It localises to the cytoplasm. The catalysed reaction is (2E,6E)-farnesyl diphosphate = (+)-5-epi-aristolochene + diphosphate. It functions in the pathway secondary metabolite biosynthesis; terpenoid biosynthesis. In terms of biological role, catalyzes the cyclization of trans,trans-farnesyl diphosphate (FPP) to the bicyclic intermediate 5-epi-aristolochene, initial step in the conversion of FPP to the sesquiterpenoid antifungal phytoalexin capsidiol. Produces germacrene A as an enzyme-bound intermediate that is not released by the enzyme, but is further cyclized to produce the bicyclic 5-epi-aristolochene. This is 5-epiaristolochene synthase (EAS) from Capsicum annuum (Capsicum pepper).